Consider the following 239-residue polypeptide: Transcriptional regulatory protein BtsR (239 aa).

Residues 3–116 (KVLIVDDEPL…RLEKTLARLR (114 aa)) form the Response regulatory domain. Position 54 is a 4-aspartylphosphate (Asp-54). Residues 137 to 239 (IPCTGHSRIY…LKSLKEAIGL (103 aa)) enclose the HTH LytTR-type domain.

In terms of processing, phosphorylated by BtsS.

Member of the two-component regulatory system BtsS/BtsR. BtsR regulates expression of btsT by binding to its promoter region. The protein is Transcriptional regulatory protein BtsR of Escherichia coli O6:H1 (strain CFT073 / ATCC 700928 / UPEC).